The following is a 113-amino-acid chain: Flagellar hook-basal body complex protein FliE (113 aa).

The protein belongs to the FliE family.

It localises to the bacterial flagellum basal body. The protein is Flagellar hook-basal body complex protein FliE of Burkholderia mallei (strain NCTC 10247).